A 189-amino-acid polypeptide reads, in one-letter code: dCTP deaminase (189 aa).

DCTP-binding positions include 112–117 (KSTYAR), 136–138 (TLE), Q157, Y171, and Q181. The active-site Proton donor/acceptor is the E138.

This sequence belongs to the dCTP deaminase family. In terms of assembly, homotrimer.

The catalysed reaction is dCTP + H2O + H(+) = dUTP + NH4(+). Its pathway is pyrimidine metabolism; dUMP biosynthesis; dUMP from dCTP (dUTP route): step 1/2. Its function is as follows. Catalyzes the deamination of dCTP to dUTP. In Burkholderia thailandensis (strain ATCC 700388 / DSM 13276 / CCUG 48851 / CIP 106301 / E264), this protein is dCTP deaminase.